Here is a 68-residue protein sequence, read N- to C-terminus: U-scoloptoxin(02)-Er1a (68 aa).

Residues 1-20 (MIVSLRCCLLLVALLITVET) form the signal peptide. 3 disulfide bridges follow: C30–C52, C38–C58, and C42–C60.

It belongs to the invertebrate defensin family. In terms of tissue distribution, expressed by the venom gland.

It is found in the secreted. Functionally, antibacterial peptide mostly active against Gram-positive bacteria. The protein is U-scoloptoxin(02)-Er1a of Ethmostigmus rubripes (Giant centipede).